Consider the following 302-residue polypeptide: Ribostamycin:4-(gamma-L-glutamylamino)-(S)-2-hydroxybutanoyl-[BtrI acyl-carrier protein] 4-(gamma-L-glutamylamino)-(S)-2-hydroxybutanoate transferase (302 aa).

The catalysed reaction is 4-(gamma-L-glutamylamino)-(2S)-2-hydroxybutanoyl-[BtrI ACP] + ribostamycin = gamma-L-glutamyl-butirosin B + holo-[BtrI ACP] + H(+). The protein operates within antibiotic biosynthesis; butirosin biosynthesis. Its function is as follows. Aminoglycoside acyltransferase that attaches the (S)-4-amino-2-hydroxybutyrate (AHBA) side chain from the acyl carrier protein BtrI to the aminoglycoside ribostamycin in the biosynthetic pathway of butirosin. The AHBA side chain protects the antibiotic from several common resistance mechanisms. In Niallia circulans (Bacillus circulans), this protein is Ribostamycin:4-(gamma-L-glutamylamino)-(S)-2-hydroxybutanoyl-[BtrI acyl-carrier protein] 4-(gamma-L-glutamylamino)-(S)-2-hydroxybutanoate transferase (btrH).